The chain runs to 88 residues: Small ribosomal subunit protein uS15c (88 aa).

This sequence belongs to the universal ribosomal protein uS15 family. Part of the 30S ribosomal subunit.

The protein localises to the plastid. Its subcellular location is the chloroplast. This chain is Small ribosomal subunit protein uS15c (rps15), found in Physcomitrium patens (Spreading-leaved earth moss).